A 733-amino-acid polypeptide reads, in one-letter code: LMBR1 domain-containing protein 2 homolog A (733 aa).

5 helical membrane passes run 1–21, 33–53, 125–145, 163–183, and 191–211; these read MIVIFIFILIAVGLLSTKILH, VYISVWIGWFMCFSIVILVPI, FYFGTLLLTWLVYPLMGSFVL, AYLYLIFGVIGLVVMIWLLAV, and MVGFAMAAANTWGLCLVIILM. The stretch at 232 to 266 forms a coiled coil; that stretch reads LKHLQFKAVELLNSKKKANEELIATMKVIRRIQEK. A run of 4 helical transmembrane segments spans residues 386–406, 423–443, 468–488, and 513–533; these read AAIVFAVLSLLIIWSEFALAF, VSNIFVQFILFFPLGYEALTC, SIIFSAAYLCRLGAPLCYNFI, and VAPFLGTYFYIYFPLLIVIVC. Disordered regions lie at residues 581–641, 649–668, and 674–696; these read NNIK…TSSA, LKKSSNNNNNNNNNNNPYEQ, and ESNDFDDDDDIESGGAGRPTYNA. Residues 596-619 are compositionally biased toward polar residues; sequence DSTSNNPKQIFKSGSTTISKQSPP. Low complexity-rich tracts occupy residues 620 to 640 and 654 to 664; these read NLNVSGGNINNNNTNNGNTSS and NNNNNNNNNNN. The segment covering 674–685 has biased composition (acidic residues); that stretch reads ESNDFDDDDDIE.

Belongs to the LIMR family.

The protein localises to the membrane. This Dictyostelium discoideum (Social amoeba) protein is LMBR1 domain-containing protein 2 homolog A.